The following is a 303-amino-acid chain: MNGIIPLYKERGLTSFDCVAKLRHILQTKKVGHSGTLDPSVDGVLPICIGSATKVVPYLMASGKVYRGSVTLGLATTTEDLDGDVVERQPLERPFTADQVAAAAQALTGTIQQTPPMYSAVKVNGRKLYEYARAGETVERPTRTITVDRFDLQGAGTFDATAGTQTIDFEIACSKGTYVRTLAVDLGQQLGVPAVMATLTRLKSGGFTLSQTVTLADVEAAMADDQIERTLRPIDYALQDYPHVALDEHLWALVKNGVFLSAAELNQATEPELALTYQGETKCLYRWSDEKKQYRPLKMFAVN.

The Nucleophile role is filled by Asp38.

It belongs to the pseudouridine synthase TruB family. Type 1 subfamily.

The enzyme catalyses uridine(55) in tRNA = pseudouridine(55) in tRNA. In terms of biological role, responsible for synthesis of pseudouridine from uracil-55 in the psi GC loop of transfer RNAs. This is tRNA pseudouridine synthase B from Levilactobacillus brevis (strain ATCC 367 / BCRC 12310 / CIP 105137 / JCM 1170 / LMG 11437 / NCIMB 947 / NCTC 947) (Lactobacillus brevis).